Reading from the N-terminus, the 359-residue chain is tRNA/tmRNA (uracil-C(5))-methyltransferase (359 aa).

Positions 183, 211, 216, 232, and 292 each coordinate S-adenosyl-L-methionine. Residue Cys-317 is the Nucleophile of the active site. Catalysis depends on Glu-351, which acts as the Proton acceptor.

It belongs to the class I-like SAM-binding methyltransferase superfamily. RNA M5U methyltransferase family. TrmA subfamily.

The enzyme catalyses uridine(54) in tRNA + S-adenosyl-L-methionine = 5-methyluridine(54) in tRNA + S-adenosyl-L-homocysteine + H(+). It catalyses the reaction uridine(341) in tmRNA + S-adenosyl-L-methionine = 5-methyluridine(341) in tmRNA + S-adenosyl-L-homocysteine + H(+). Dual-specificity methyltransferase that catalyzes the formation of 5-methyluridine at position 54 (m5U54) in all tRNAs, and that of position 341 (m5U341) in tmRNA (transfer-mRNA). The chain is tRNA/tmRNA (uracil-C(5))-methyltransferase from Pseudomonas fluorescens (strain SBW25).